Reading from the N-terminus, the 38-residue chain is Kappa-actitoxin-Bcs3a (38 aa).

In terms of domain architecture, ShKT spans Cys2–Cys37. Cystine bridges form between Cys2–Cys37, Cys11–Cys30, and Cys20–Cys34. Residues Lys25 to Tyr26 form a crucial for binding to potassium channels region.

It belongs to the sea anemone type 1 potassium channel toxin family. Type 1b subfamily.

The protein resides in the secreted. The protein localises to the nematocyst. Its function is as follows. Inhibits voltage-gated potassium channels (IC(50)=405.0 nM for rKCNA1/Kv1.1, IC(50)=0.03 nM for rKCNA2/Kv1.2, IC(50)=1.31 nM for rKCNA6/Kv1.6, IC(50)=74.11 nM for hKCNA3/Kv1.3, and IC(50)=247.69 nM for insect Shaker IR). Binds the Shaker IR channels in a voltage-independent manner. The chain is Kappa-actitoxin-Bcs3a from Bunodosoma caissarum (Sea anemone).